The sequence spans 138 residues: Putative pre-16S rRNA nuclease (138 aa).

The protein belongs to the YqgF nuclease family.

Its subcellular location is the cytoplasm. Its function is as follows. Could be a nuclease involved in processing of the 5'-end of pre-16S rRNA. The sequence is that of Putative pre-16S rRNA nuclease from Listeria monocytogenes serovar 1/2a (strain ATCC BAA-679 / EGD-e).